The chain runs to 510 residues: Cytochrome c-552 (510 aa).

The N-terminal stretch at 1 to 50 (MVVFLFILYRQSDLKFKSMNGVIIVNTLKKRLFVATTMIWGLSVTLPVLA) is a signal peptide. Position 124 (His124) interacts with heme c. Positions 152, 155, and 156 each coordinate heme. 6 residues coordinate heme c: Cys190, Cys193, His194, Cys239, Cys242, and His243. Ca(2+)-binding residues include Glu245, Tyr246, Lys291, and Gln293. Tyr246 is a binding site for substrate. Position 294 (His294) interacts with substrate. The heme c site is built by His305, Cys312, Cys315, His316, His331, Cys344, Cys347, His348, and His423.

It belongs to the cytochrome c-552 family. It depends on Ca(2+) as a cofactor. Heme c is required as a cofactor.

It localises to the periplasm. It catalyses the reaction 6 Fe(III)-[cytochrome c] + NH4(+) + 2 H2O = 6 Fe(II)-[cytochrome c] + nitrite + 8 H(+). It functions in the pathway nitrogen metabolism; nitrate reduction (assimilation). Functionally, catalyzes the reduction of nitrite to ammonia, consuming six electrons in the process. The chain is Cytochrome c-552 from Pasteurella multocida (strain Pm70).